A 213-amino-acid chain; its full sequence is Cell division protein SepF (213 aa).

Residues 27–103 form a disordered region; sequence VDAPAPRRAP…GSLRGSAPTR (77 aa). 2 stretches are compositionally biased toward basic and acidic residues: residues 35 to 51 and 72 to 90; these read APVEDRRYPRRGERFAD and DEDRFVSRHAPSREFDRPA.

Belongs to the SepF family. In terms of assembly, homodimer. Interacts with FtsZ.

The protein resides in the cytoplasm. Functionally, cell division protein that is part of the divisome complex and is recruited early to the Z-ring. Probably stimulates Z-ring formation, perhaps through the cross-linking of FtsZ protofilaments. Its function overlaps with FtsA. The protein is Cell division protein SepF of Mycobacteroides abscessus (strain ATCC 19977 / DSM 44196 / CCUG 20993 / CIP 104536 / JCM 13569 / NCTC 13031 / TMC 1543 / L948) (Mycobacterium abscessus).